Reading from the N-terminus, the 432-residue chain is Adenosylhomocysteinase (432 aa).

Position 2 is an N-acetylserine (serine 2). Substrate is bound by residues threonine 57, aspartate 131, and glutamate 156. The residue at position 183 (serine 183) is a Phosphoserine. The NAD binding stretch occupies residues 183–350; it reads SVTKSKFDNL…EGRLVNLGCA (168 aa). 2 residues coordinate substrate: lysine 186 and aspartate 190. N6-(2-hydroxyisobutyryl)lysine is present on lysine 186. Tyrosine 193 is subject to Phosphotyrosine.

Belongs to the adenosylhomocysteinase family. In terms of assembly, homotetramer. Interaction with AHCYL1. It depends on NAD(+) as a cofactor.

The protein resides in the cytoplasm. It is found in the melanosome. The protein localises to the nucleus. It localises to the endoplasmic reticulum. It catalyses the reaction S-adenosyl-L-homocysteine + H2O = L-homocysteine + adenosine. It functions in the pathway amino-acid biosynthesis; L-homocysteine biosynthesis; L-homocysteine from S-adenosyl-L-homocysteine: step 1/1. Its function is as follows. Catalyzes the hydrolysis of S-adenosyl-L-homocysteine to form adenosine and homocysteine. Binds copper ions. The sequence is that of Adenosylhomocysteinase (AHCY) from Sus scrofa (Pig).